We begin with the raw amino-acid sequence, 289 residues long: Diaminopimelate epimerase (289 aa).

Substrate is bound by residues Asn13, Gln47, and Asn67. Residue Cys76 is the Proton donor of the active site. Residues 77 to 78 (GN), Asn167, Asn200, and 218 to 219 (ER) contribute to the substrate site. The active-site Proton acceptor is the Cys227. 228-229 (GT) lines the substrate pocket.

Belongs to the diaminopimelate epimerase family. In terms of assembly, homodimer.

The protein localises to the cytoplasm. The catalysed reaction is (2S,6S)-2,6-diaminopimelate = meso-2,6-diaminopimelate. Its pathway is amino-acid biosynthesis; L-lysine biosynthesis via DAP pathway; DL-2,6-diaminopimelate from LL-2,6-diaminopimelate: step 1/1. Catalyzes the stereoinversion of LL-2,6-diaminopimelate (L,L-DAP) to meso-diaminopimelate (meso-DAP), a precursor of L-lysine and an essential component of the bacterial peptidoglycan. This chain is Diaminopimelate epimerase, found in Burkholderia vietnamiensis (strain G4 / LMG 22486) (Burkholderia cepacia (strain R1808)).